We begin with the raw amino-acid sequence, 218 residues long: Ribose-5-phosphate isomerase A (218 aa).

Substrate is bound by residues 28-31, 81-84, and 94-97; these read TGST, DGAD, and KGGG. Glutamate 103 functions as the Proton acceptor in the catalytic mechanism. Lysine 121 is a binding site for substrate.

This sequence belongs to the ribose 5-phosphate isomerase family. As to quaternary structure, homodimer.

It carries out the reaction aldehydo-D-ribose 5-phosphate = D-ribulose 5-phosphate. The protein operates within carbohydrate degradation; pentose phosphate pathway; D-ribose 5-phosphate from D-ribulose 5-phosphate (non-oxidative stage): step 1/1. Catalyzes the reversible conversion of ribose-5-phosphate to ribulose 5-phosphate. The sequence is that of Ribose-5-phosphate isomerase A from Vibrio cholerae serotype O1 (strain ATCC 39541 / Classical Ogawa 395 / O395).